The following is an 872-amino-acid chain: Cyanophycin synthetase (872 aa).

An ATP-grasp domain is found at 224 to 480 (KTILQDAGVP…VAAPVMDMLF (257 aa)). 495 to 501 (GTNGKTT) lines the ATP pocket.

This sequence in the C-terminal section; belongs to the MurCDEF family. Homodimer.

The catalysed reaction is [L-4-(L-arginin-2-N-yl)aspartate](n) + L-aspartate + ATP = [L-4-(L-arginin-2-N-yl)aspartate](n)-L-aspartate + ADP + phosphate + H(+). The enzyme catalyses [L-4-(L-arginin-2-N-yl)aspartate](n)-L-aspartate + L-arginine + ATP = [L-4-(L-arginin-2-N-yl)aspartate](n+1) + ADP + phosphate + H(+). Functionally, catalyzes the ATP-dependent polymerization of arginine and aspartate to multi-L-arginyl-poly-L-aspartic acid (cyanophycin; a water-insoluble reserve polymer). The chain is Cyanophycin synthetase (cphA) from Crocosphaera subtropica (strain ATCC 51142 / BH68) (Cyanothece sp. (strain ATCC 51142)).